Consider the following 344-residue polypeptide: tRNA N6-adenosine threonylcarbamoyltransferase (344 aa).

Positions 110 and 114 each coordinate Fe cation. Substrate-binding positions include 133–137 (VMSGA), Asp166, Gly179, and Asn278. Asp303 serves as a coordination point for Fe cation.

The protein belongs to the KAE1 / TsaD family. Fe(2+) is required as a cofactor.

The protein resides in the cytoplasm. It carries out the reaction L-threonylcarbamoyladenylate + adenosine(37) in tRNA = N(6)-L-threonylcarbamoyladenosine(37) in tRNA + AMP + H(+). Its function is as follows. Required for the formation of a threonylcarbamoyl group on adenosine at position 37 (t(6)A37) in tRNAs that read codons beginning with adenine. Is involved in the transfer of the threonylcarbamoyl moiety of threonylcarbamoyl-AMP (TC-AMP) to the N6 group of A37, together with TsaE and TsaB. TsaD likely plays a direct catalytic role in this reaction. This is tRNA N6-adenosine threonylcarbamoyltransferase from Chlamydia felis (strain Fe/C-56) (Chlamydophila felis).